A 321-amino-acid polypeptide reads, in one-letter code: Citrate synthase (321 aa).

Catalysis depends on residues H248 and D306.

This sequence belongs to the citrate synthase family.

It catalyses the reaction oxaloacetate + acetyl-CoA + H2O = citrate + CoA + H(+). It functions in the pathway carbohydrate metabolism; tricarboxylic acid cycle; isocitrate from oxaloacetate: step 1/2. The chain is Citrate synthase (gltA) from Bartonella bacilliformis.